The following is an 83-amino-acid chain: Conotoxin Im22.1 (83 aa).

The signal sequence occupies residues M1–A18. Residues G19–K26 constitute a propeptide that is removed on maturation.

It belongs to the conotoxin E superfamily. In terms of processing, contain 4 disulfide bonds. Expressed by the venom duct.

Its subcellular location is the secreted. Functionally, probable neurotoxin. The sequence is that of Conotoxin Im22.1 from Conus imperialis (Imperial cone).